The sequence spans 437 residues: GTPase Der (437 aa).

EngA-type G domains are found at residues 3–168 and 178–353; these read PLIA…PCPE and IKLA…LNRR. Residues 9–16, 56–60, 120–123, 184–191, 231–235, and 296–299 each bind GTP; these read GRPNVGKS, DTGGY, NKVD, DTAGL, and NKWD. The KH-like domain occupies 354–437; it reads QKISTSNLNR…IPITMRFLRK (84 aa).

It belongs to the TRAFAC class TrmE-Era-EngA-EngB-Septin-like GTPase superfamily. EngA (Der) GTPase family. In terms of assembly, associates with the 50S ribosomal subunit.

Its function is as follows. GTPase that plays an essential role in the late steps of ribosome biogenesis. This chain is GTPase Der, found in Chlorobaculum tepidum (strain ATCC 49652 / DSM 12025 / NBRC 103806 / TLS) (Chlorobium tepidum).